Consider the following 356-residue polypeptide: GDSL esterase/lipase At5g37690 (356 aa).

Positions 1 to 18 are cleaved as a signal peptide; sequence MMILRLALAIVISTYATA. Serine 34 functions as the Nucleophile in the catalytic mechanism. Residues asparagine 116 and asparagine 291 are each glycosylated (N-linked (GlcNAc...) asparagine). Catalysis depends on residues aspartate 322 and histidine 325.

The protein belongs to the 'GDSL' lipolytic enzyme family.

The protein localises to the secreted. The polypeptide is GDSL esterase/lipase At5g37690 (Arabidopsis thaliana (Mouse-ear cress)).